The chain runs to 442 residues: DNA topoisomerase medium subunit (442 aa).

The Topo IIA-type catalytic domain maps to 29–438 (IPNMIDGFKP…DVVTEYTKDL (410 aa)). The O-(5'-phospho-DNA)-tyrosine intermediate role is filled by Tyr117.

The protein belongs to the type II topoisomerase family. Part of the DNA topoisomerase complex made of gp39, gp52 and gp60. Mg(2+) serves as cofactor.

It carries out the reaction ATP-dependent breakage, passage and rejoining of double-stranded DNA.. In terms of biological role, medium subunit of the DNA topoisomerase that untwists superhelical DNA. Controls topological states of double-stranded DNA by transient breakage and subsequent rejoining of DNA strands. In Enterobacteria phage T4 (Bacteriophage T4), this protein is DNA topoisomerase medium subunit (52).